The primary structure comprises 163 residues: NADH-quinone oxidoreductase subunit I (163 aa).

4Fe-4S ferredoxin-type domains are found at residues 55 to 84 (RRYE…IESE) and 94 to 123 (TQYD…ETRV). [4Fe-4S] cluster-binding residues include C64, C67, C70, C74, C103, C106, C109, and C113.

It belongs to the complex I 23 kDa subunit family. NDH-1 is composed of 14 different subunits. Subunits NuoA, H, J, K, L, M, N constitute the membrane sector of the complex. It depends on [4Fe-4S] cluster as a cofactor.

Its subcellular location is the cell inner membrane. The enzyme catalyses a quinone + NADH + 5 H(+)(in) = a quinol + NAD(+) + 4 H(+)(out). Its function is as follows. NDH-1 shuttles electrons from NADH, via FMN and iron-sulfur (Fe-S) centers, to quinones in the respiratory chain. The immediate electron acceptor for the enzyme in this species is believed to be ubiquinone. Couples the redox reaction to proton translocation (for every two electrons transferred, four hydrogen ions are translocated across the cytoplasmic membrane), and thus conserves the redox energy in a proton gradient. The protein is NADH-quinone oxidoreductase subunit I of Hydrogenovibrio crunogenus (strain DSM 25203 / XCL-2) (Thiomicrospira crunogena).